Reading from the N-terminus, the 219-residue chain is 2-C-methyl-D-erythritol 4-phosphate cytidylyltransferase (219 aa).

Belongs to the IspD/TarI cytidylyltransferase family. IspD subfamily.

It catalyses the reaction 2-C-methyl-D-erythritol 4-phosphate + CTP + H(+) = 4-CDP-2-C-methyl-D-erythritol + diphosphate. It functions in the pathway isoprenoid biosynthesis; isopentenyl diphosphate biosynthesis via DXP pathway; isopentenyl diphosphate from 1-deoxy-D-xylulose 5-phosphate: step 2/6. In terms of biological role, catalyzes the formation of 4-diphosphocytidyl-2-C-methyl-D-erythritol from CTP and 2-C-methyl-D-erythritol 4-phosphate (MEP). This Bacteroides fragilis (strain ATCC 25285 / DSM 2151 / CCUG 4856 / JCM 11019 / LMG 10263 / NCTC 9343 / Onslow / VPI 2553 / EN-2) protein is 2-C-methyl-D-erythritol 4-phosphate cytidylyltransferase.